A 228-amino-acid chain; its full sequence is 7-cyano-7-deazaguanine synthase (228 aa).

Position 16–26 (16–26 (FSGGQDSTTCL)) interacts with ATP. Zn(2+)-binding residues include Cys195, Cys203, Cys206, and Cys209.

The protein belongs to the QueC family. The cofactor is Zn(2+).

The enzyme catalyses 7-carboxy-7-deazaguanine + NH4(+) + ATP = 7-cyano-7-deazaguanine + ADP + phosphate + H2O + H(+). It functions in the pathway purine metabolism; 7-cyano-7-deazaguanine biosynthesis. Catalyzes the ATP-dependent conversion of 7-carboxy-7-deazaguanine (CDG) to 7-cyano-7-deazaguanine (preQ(0)). This is 7-cyano-7-deazaguanine synthase from Haemophilus influenzae (strain ATCC 51907 / DSM 11121 / KW20 / Rd).